Consider the following 60-residue polypeptide: Homeobox protein engrailed-like (60 aa).

Residues Gly1–Gln41 constitute a DNA-binding region (homeobox).

It belongs to the engrailed homeobox family.

The protein resides in the nucleus. This chain is Homeobox protein engrailed-like, found in Lampetra planeri (Brook lamprey).